The following is a 536-amino-acid chain: Pentatricopeptide repeat-containing protein At2g06000 (536 aa).

PPR repeat units lie at residues 102-136 (SFWT…GVSP), 137-167 (NNRL…SFEV), 170-200 (CCMV…HLRF), 205-239 (DTKT…GCEP), 240-274 (DIVT…SVCS), 276-310 (DVVT…GIYP), 311-345 (TNVT…GCFP), 346-380 (DVVT…GMFP), 381-415 (NAFT…DIIP), 416-450 (QPFM…KCKP), 451-485 (DKIT…GCSP), and 486-523 (DKIT…NVVP).

Belongs to the PPR family. P subfamily.

The protein is Pentatricopeptide repeat-containing protein At2g06000 of Arabidopsis thaliana (Mouse-ear cress).